The primary structure comprises 151 residues: Small ribosomal subunit protein bS6 (151 aa).

The tract at residues 97 to 151 (EAEPSAMMQKRDRDDRKDRDRGDRPRRRDDDFGGGDRGDRGDRGDRPERNFGGEN) is disordered. Over residues 105–151 (QKRDRDDRKDRDRGDRPRRRDDDFGGGDRGDRGDRGDRPERNFGGEN) the composition is skewed to basic and acidic residues.

The protein belongs to the bacterial ribosomal protein bS6 family.

In terms of biological role, binds together with bS18 to 16S ribosomal RNA. The sequence is that of Small ribosomal subunit protein bS6 from Methylorubrum populi (strain ATCC BAA-705 / NCIMB 13946 / BJ001) (Methylobacterium populi).